Consider the following 281-residue polypeptide: Probable feruloyl esterase A (281 aa).

The N-terminal stretch at 1 to 21 is a signal peptide; that stretch reads MKQFSAKYALILLATAGQALA. 3 disulfide bridges follow: C50-C279, C112-C115, and C248-C255. A substrate-binding site is contributed by D98. The N-linked (GlcNAc...) asparagine glycan is linked to N100. Y101 is a substrate binding site. Residue S154 is the Nucleophile of the active site. Catalysis depends on D215, which acts as the Charge relay system. Substrate is bound at residue H268. Catalysis depends on H268, which acts as the Charge relay system.

This sequence belongs to the AB hydrolase superfamily. FaeA family.

It is found in the secreted. The enzyme catalyses feruloyl-polysaccharide + H2O = ferulate + polysaccharide.. Its function is as follows. Involved in degradation of plant cell walls. Hydrolyzes the feruloyl-arabinose ester bond in arabinoxylans, and the feruloyl-galactose ester bond in pectin. The polypeptide is Probable feruloyl esterase A (faeA) (Aspergillus niger (strain ATCC MYA-4892 / CBS 513.88 / FGSC A1513)).